Here is a 189-residue protein sequence, read N- to C-terminus: Probable nicotinate-nucleotide adenylyltransferase (189 aa).

Belongs to the NadD family.

The catalysed reaction is nicotinate beta-D-ribonucleotide + ATP + H(+) = deamido-NAD(+) + diphosphate. Its pathway is cofactor biosynthesis; NAD(+) biosynthesis; deamido-NAD(+) from nicotinate D-ribonucleotide: step 1/1. Its function is as follows. Catalyzes the reversible adenylation of nicotinate mononucleotide (NaMN) to nicotinic acid adenine dinucleotide (NaAD). The protein is Probable nicotinate-nucleotide adenylyltransferase of Bacillus cereus (strain AH187).